We begin with the raw amino-acid sequence, 241 residues long: Agamous-like MADS-box protein AGL8 homolog (241 aa).

One can recognise an MADS-box domain in the interval 3 to 57 (RGRVQLKRIENKINRQVTFSKRRSGLLKKAHEISVLCDAEVALVIFSSKGKLFEY). Residues 88–178 (SENWVLEHAK…LKKIKEREKN (91 aa)) enclose the K-box domain.

It is found in the nucleus. Probable transcription factor. The chain is Agamous-like MADS-box protein AGL8 homolog (AGL8) from Sinapis alba (White mustard).